The sequence spans 633 residues: Probable extracellular metalloproteinase 3 (633 aa).

A signal peptide spans 1–18 (MHGLLLAGLLALPMNVLA). The propeptide occupies 19–246 (HPAEQHASNV…VHNVVDYVAS (228 aa)). Asparagine 410 is a glycosylation site (N-linked (GlcNAc...) asparagine). Histidine 429 contacts Zn(2+). Glutamate 430 is a catalytic residue. Histidine 433 provides a ligand contact to Zn(2+). Residues asparagine 480 and asparagine 622 are each glycosylated (N-linked (GlcNAc...) asparagine).

The protein belongs to the peptidase M36 family. Requires Zn(2+) as cofactor.

Its subcellular location is the secreted. Its function is as follows. Secreted metalloproteinase probably acting as a virulence factor. This Trichophyton verrucosum (strain HKI 0517) protein is Probable extracellular metalloproteinase 3 (MEP3).